The primary structure comprises 354 residues: S-adenosylmethionine:tRNA ribosyltransferase-isomerase (354 aa).

It belongs to the QueA family. Monomer.

It localises to the cytoplasm. It catalyses the reaction 7-aminomethyl-7-carbaguanosine(34) in tRNA + S-adenosyl-L-methionine = epoxyqueuosine(34) in tRNA + adenine + L-methionine + 2 H(+). It participates in tRNA modification; tRNA-queuosine biosynthesis. In terms of biological role, transfers and isomerizes the ribose moiety from AdoMet to the 7-aminomethyl group of 7-deazaguanine (preQ1-tRNA) to give epoxyqueuosine (oQ-tRNA). This is S-adenosylmethionine:tRNA ribosyltransferase-isomerase from Salmonella dublin (strain CT_02021853).